The sequence spans 912 residues: Lateral signaling target protein 2 homolog (912 aa).

The segment covering 323-332 (NVNTSNNSDN) has biased composition (low complexity). Disordered regions lie at residues 323–360 (NVNT…SSFY), 455–610 (ADSG…ESSQ), 664–745 (NSSP…ASSA), and 769–846 (GGGS…APPR). Basic and acidic residues predominate over residues 333 to 355 (SDSRVDDSPNDELRHESETRDNR). Residues 455–468 (ADSGLGTANPSVDN) are compositionally biased toward polar residues. Residues 486–505 (SSEEGEIDEYDNEEDDEDSD) show a composition bias toward acidic residues. Residues 530–544 (YRTHKQQHHHRHRRS) are compositionally biased toward basic residues. 2 stretches are compositionally biased toward polar residues: residues 545–556 (SGSIMSATSSRK) and 572–590 (VPSN…DTSP). Residues 591–610 (SSGNQSECSSTSSTTGESSQ) show a composition bias toward low complexity. Basic and acidic residues predominate over residues 682–699 (DKPKEPDPTDLFEFRASE). Polar residues-rich tracts occupy residues 705-717 (PGQN…QSIY), 735-745 (PGTSPIRASSA), 780-801 (ERSV…ATDS), and 822-834 (SRSS…NGTS). The FYVE-type zinc-finger motif lies at 850–910 (DGDAPRCMAC…VCRDCYVREV (61 aa)). Residues cysteine 856, cysteine 859, cysteine 872, cysteine 875, cysteine 880, cysteine 883, cysteine 902, and cysteine 905 each contribute to the Zn(2+) site.

Belongs to the lst-2 family.

Functionally, negative regulator of epidermal growth factor receptor (EGFR) signaling. The sequence is that of Lateral signaling target protein 2 homolog from Aedes aegypti (Yellowfever mosquito).